The primary structure comprises 248 residues: Triosephosphate isomerase (248 aa).

9-11 (NWK) serves as a coordination point for substrate. The Electrophile role is filled by histidine 93. Residue glutamate 163 is the Proton acceptor of the active site. Substrate is bound by residues glycine 169, serine 208, and 229-230 (GG).

This sequence belongs to the triosephosphate isomerase family. Homodimer.

It is found in the cytoplasm. It carries out the reaction D-glyceraldehyde 3-phosphate = dihydroxyacetone phosphate. It functions in the pathway carbohydrate biosynthesis; gluconeogenesis. The protein operates within carbohydrate degradation; glycolysis; D-glyceraldehyde 3-phosphate from glycerone phosphate: step 1/1. Involved in the gluconeogenesis. Catalyzes stereospecifically the conversion of dihydroxyacetone phosphate (DHAP) to D-glyceraldehyde-3-phosphate (G3P). This Jannaschia sp. (strain CCS1) protein is Triosephosphate isomerase.